A 123-amino-acid polypeptide reads, in one-letter code: Small ribosomal subunit protein uS11 (123 aa).

This sequence belongs to the universal ribosomal protein uS11 family. As to quaternary structure, part of the 30S ribosomal subunit. Interacts with proteins S7 and S18. Binds to IF-3.

In terms of biological role, located on the platform of the 30S subunit, it bridges several disparate RNA helices of the 16S rRNA. Forms part of the Shine-Dalgarno cleft in the 70S ribosome. The sequence is that of Small ribosomal subunit protein uS11 from Coxiella burnetii (strain CbuG_Q212) (Coxiella burnetii (strain Q212)).